We begin with the raw amino-acid sequence, 1488 residues long: Phenolphthiocerol/phthiocerol polyketide synthase subunit E (1488 aa).

A Ketosynthase family 3 (KS3) domain is found at 5 to 438 (ENAIAVVGMA…GTNAHVVLEE (434 aa)). Active-site for beta-ketoacyl synthase activity residues include Cys184, His320, and His361. An acyltransferase region spans residues 551–868 (VFLFPGQGAQ…GELWSAGVEV (318 aa)). Ser641 functions as the For malonyltransferase activity in the catalytic mechanism. The 75-residue stretch at 930-1004 (NGESQTEVTL…SLTAAVDASF (75 aa)) folds into the Carrier domain. The residue at position 965 (Ser965) is an O-(pantetheine 4'-phosphoryl)serine. 1286–1331 (EGVVAVELEGEGRSVLRPDVDLRRTVGWFTTYYPVPLACATGLGAL) contacts NADP(+).

The cofactor is NADP(+). Requires pantetheine 4'-phosphate as cofactor.

It catalyses the reaction icosanoyl-[(phenol)carboxyphthiodiolenone synthase] + 2 (S)-methylmalonyl-CoA + 3 malonyl-CoA + 5 NADPH + 10 H(+) = C32-carboxyphthiodiolenone-[(phenol)carboxyphthiodiolenone synthase] + 5 CO2 + 5 NADP(+) + 5 CoA + 2 H2O. It carries out the reaction docosanoyl-[(phenol)carboxyphthiodiolenone synthase] + 2 (S)-methylmalonyl-CoA + 3 malonyl-CoA + 5 NADPH + 10 H(+) = C34-carboxyphthiodiolenone-[(phenol)carboxyphthiodiolenone synthase] + 5 CO2 + 5 NADP(+) + 5 CoA + 2 H2O. The catalysed reaction is 17-(4-hydroxyphenyl)heptadecanoyl-[(phenol)carboxyphthiodiolenone synthase] + 2 (S)-methylmalonyl-CoA + 3 malonyl-CoA + 5 NADPH + 10 H(+) = C35-(phenol)carboxyphthiodiolenone-[(phenol)carboxyphthiodiolenone synthase] + 5 CO2 + 5 NADP(+) + 5 CoA + 2 H2O. The enzyme catalyses 19-(4-hydroxyphenyl)nonadecanoyl-[(phenol)carboxyphthiodiolenone synthase] + 2 (S)-methylmalonyl-CoA + 3 malonyl-CoA + 5 NADPH + 10 H(+) = C37-(phenol)carboxyphthiodiolenone-[(phenol)carboxyphthiodiolenone synthase] + 5 CO2 + 5 NADP(+) + 5 CoA + 2 H2O. Its pathway is lipid metabolism; fatty acid biosynthesis. Its function is as follows. Part of the PpsABCDE complex involved in the biosynthesis of the lipid core common to phthiocerols and phenolphthiocerols by successive additions of malonyl-CoA or methylmalonyl-CoA extender units. PpsA can accept as substrate the activated forms of either icosanoyl (C20), docosanoyl (C22) or lignoceroyl (C24) groups from FadD26, or a (4-hydroxyphenyl)-C17 or (4-hydroxyphenyl)-C19 fatty acyl from FadD29. PpsA initiates the biosynthesis and extends its substrate using a malonyl-CoA extender unit. The PpsB and PpsC proteins add the second and third malonyl-CoA extender units. PpsD adds an (R)-methylmalonyl unit and PpsE adds a second (R)-methylmalonyl unit. The incorporation of the methylmalonyl units results in formation of two branched methyl groups in the elongated product. This chain is Phenolphthiocerol/phthiocerol polyketide synthase subunit E (ppsE), found in Mycobacterium tuberculosis (strain CDC 1551 / Oshkosh).